A 262-amino-acid polypeptide reads, in one-letter code: Small ribosomal subunit protein uS3 (262 aa).

The KH type-2 domain maps to 39-107; the sequence is VREFLKKKLK…PVHVNIEEIR (69 aa). Residues 211 to 262 are disordered; the sequence is NDAPVVEEPQEERRKRPGRPEGRRREGEGRPAGQRRGAGAGARRGTDAKTGE. Over residues 221–239 the composition is skewed to basic and acidic residues; that stretch reads EERRKRPGRPEGRRREGEG.

Belongs to the universal ribosomal protein uS3 family. In terms of assembly, part of the 30S ribosomal subunit. Forms a tight complex with proteins S10 and S14.

Its function is as follows. Binds the lower part of the 30S subunit head. Binds mRNA in the 70S ribosome, positioning it for translation. This is Small ribosomal subunit protein uS3 from Ralstonia pickettii (strain 12J).